The following is a 369-amino-acid chain: DNA replication and repair protein RecF (369 aa).

Glycine 30 to threonine 37 contacts ATP.

This sequence belongs to the RecF family.

It localises to the cytoplasm. Functionally, the RecF protein is involved in DNA metabolism; it is required for DNA replication and normal SOS inducibility. RecF binds preferentially to single-stranded, linear DNA. It also seems to bind ATP. The chain is DNA replication and repair protein RecF from Bacteroides thetaiotaomicron (strain ATCC 29148 / DSM 2079 / JCM 5827 / CCUG 10774 / NCTC 10582 / VPI-5482 / E50).